Reading from the N-terminus, the 578-residue chain is DNA polymerase III subunit gamma/tau (578 aa).

42-49 (GPRGCGKT) contributes to the ATP binding site. Zn(2+) contacts are provided by Cys61, Cys70, Cys73, and Cys76. 2 disordered regions span residues 389-423 (APQA…ASSE) and 525-559 (AVNP…RDPE). Basic and acidic residues-rich tracts occupy residues 402-412 (EPKHQPAREPR) and 536-559 (QRDE…RDPE).

This sequence belongs to the DnaX/STICHEL family. DNA polymerase III contains a core (composed of alpha, epsilon and theta chains) that associates with a tau subunit. This core dimerizes to form the POLIII' complex. PolIII' associates with the gamma complex (composed of gamma, delta, delta', psi and chi chains) and with the beta chain to form the complete DNA polymerase III complex.

It catalyses the reaction DNA(n) + a 2'-deoxyribonucleoside 5'-triphosphate = DNA(n+1) + diphosphate. In terms of biological role, DNA polymerase III is a complex, multichain enzyme responsible for most of the replicative synthesis in bacteria. This DNA polymerase also exhibits 3' to 5' exonuclease activity. The protein is DNA polymerase III subunit gamma/tau (dnaX) of Mycobacterium bovis (strain ATCC BAA-935 / AF2122/97).